Reading from the N-terminus, the 100-residue chain is UPF0213 protein YhbQ (100 aa).

Positions 2 to 77 constitute a GIY-YIG domain; it reads TPWYLYLIRT…KQLTKRQKER (76 aa).

It belongs to the UPF0213 family.

This Salmonella choleraesuis (strain SC-B67) protein is UPF0213 protein YhbQ.